The chain runs to 968 residues: RNA polymerase-associated protein RapA (968 aa).

The Helicase ATP-binding domain occupies 163-332; the sequence is EVGSRYAPRV…FARLRLLDPD (170 aa). 176–183 serves as a coordination point for ATP; sequence DEVGLGKT. The DEAH box signature appears at 278–281; sequence DEAH. Positions 491-655 constitute a Helicase C-terminal domain; the sequence is RVDWLIEFLK…EFADELINVL (165 aa).

This sequence belongs to the SNF2/RAD54 helicase family. RapA subfamily. As to quaternary structure, interacts with the RNAP. Has a higher affinity for the core RNAP than for the holoenzyme. Its ATPase activity is stimulated by binding to RNAP.

Transcription regulator that activates transcription by stimulating RNA polymerase (RNAP) recycling in case of stress conditions such as supercoiled DNA or high salt concentrations. Probably acts by releasing the RNAP, when it is trapped or immobilized on tightly supercoiled DNA. Does not activate transcription on linear DNA. Probably not involved in DNA repair. The sequence is that of RNA polymerase-associated protein RapA from Shewanella frigidimarina (strain NCIMB 400).